A 423-amino-acid chain; its full sequence is Amino acid transporter AVT1J (423 aa).

Helical transmembrane passes span 39-59 (CFHG…YALA), 63-83 (WLSL…AILI), 110-130 (VIVS…FLIL), 151-171 (FQGK…SVWL), 186-206 (FASG…GVGF), 219-239 (VATS…FPTL), 252-272 (VMII…VLGY), 297-317 (AIWT…TPII), 333-355 (ASGF…LLPF), 359-381 (LMSL…LCYL), and 390-410 (LGFE…VVIT).

Belongs to the amino acid/polyamine transporter 2 family. Amino acid/auxin permease (AAAP) (TC 2.A.18.5) subfamily.

Its subcellular location is the membrane. The chain is Amino acid transporter AVT1J from Arabidopsis thaliana (Mouse-ear cress).